A 1066-amino-acid polypeptide reads, in one-letter code: MTSYRERSADLARFYTVTEPQRHPRGYTVYKVTARVVSRRNPEDVQEIIVWKRYSDFKKLHKELWQIHKNLFRHSELFPPFAKGIVFGRFDETVIEERRQCAEDLLQFSANIPALYNSKQLEDFFKGGIINDSSELIGPAEAHSDSLIDTFPECSTEGFSSDSDLVSLTVDVDSLAELDDGMASNQNSPIRTFGLNLSSDSSALGAVASDSEQSKTEEERESRSLFPGSLKPKLGKRDYLEKAGELIKLALKKEEEDDYEAASDFYRKGVDLLLEGVQGESSPTRREAVKRRTAEYLMRAESISSLYGKPQLDDVSQPPGSLSSRPLWNLRSPAEELKAFRVLGVIDKVLLVMDTRTEQTFILKGLRKSSEYSRNRKTIIPRCVPNMVCLHKYIISEESVFLVLQHAEGGKLWSYISKFLNRSPEESFDIKEVKKPTLAKVHLQQPTSSPQDSSSFESRGSDGGSMLKALPLKSSLTPSSQDDSNQEDDGQDSSPKWPDSGSSSEEECTTSYLTLCNEYGQEKIEPGSLNEEPFMKTEGNGVDTKAIKSFPAHLAADSDSPSTQLRAHELKFFPNDDPEAVSSPRTSDSLSRSKNSPMEFFRIDSKDSASELLGLDFGEKLYSLKSEPLKPFFTLPDGDSASRSFNTSESKVEFKAQDTISRGSDDSVPVISFKDAAFDDVSGTDEGRPDLLVNLPGELESTREAAAMGPTKFTQTNIGIIENKLLEAPDVLCLRLSTEQCQAHEEKGIEELSDPSGPKSYSITEKHYAQEDPRMLFVAAVDHSSSGDMSLLPSSDPKFQGLGVVESAVTANNTEESLFRICSPLSGANEYIASTDTLKTEEVLLFTDQTDDLAKEEPTSLFQRDSETKGESGLVLEGDKEIHQIFEDLDKKLALASRFYIPEGCIQRWAAEMVVALDALHREGIVCRDLNPNNILLNDRGHIQLTYFSRWSEVEDSCDSDAIERMYCAPEVGAITEETEACDWWSLGAVLFELLTGKTLVECHPAGINTHTTLNMPECVSEEARSLIQQLLQFNPLERLGAGVAGVEDIKSHPFFTPVDWAELMR.

A PX domain is found at 8–132 (SADLARFYTV…DFFKGGIIND (125 aa)). The disordered stretch occupies residues 207–228 (VASDSEQSKTEEERESRSLFPG). The segment covering 212–223 (EQSKTEEERESR) has biased composition (basic and acidic residues). Residues 277–305 (VQGESSPTRREAVKRRTAEYLMRAESISS) form the MIT domain. A phosphoserine mark is found at Ser-282, Ser-423, Ser-427, Ser-449, and Ser-455. Residues 344–445 (GVIDKVLLVM…PTLAKVHLQQ (102 aa)) form the Protein kinase 1 domain. The disordered stretch occupies residues 441–509 (VHLQQPTSSP…SGSSSEEECT (69 aa)). Residues 448–458 (SSPQDSSSFES) are compositionally biased toward low complexity. Polar residues predominate over residues 474–483 (SSLTPSSQDD). Over residues 492 to 503 (DSSPKWPDSGSS) the composition is skewed to low complexity. Phosphoserine occurs at positions 494, 528, 583, 605, 608, 640, 661, 664, 667, and 794. Positions 553–596 (HLAADSDSPSTQLRAHELKFFPNDDPEAVSSPRTSDSLSRSKNS) are disordered. Low complexity predominate over residues 582-593 (SSPRTSDSLSRS). The 263-residue stretch at 794–1056 (SSDPKFQGLG…VEDIKSHPFF (263 aa)) folds into the Protein kinase 2 domain. Residues 801–809 (GLGVVESAV) and Arg-820 each bind ATP. Ser-872 carries the phosphoserine modification. The active-site Proton acceptor is Asp-929.

This sequence belongs to the protein kinase superfamily. Ser/Thr protein kinase family. S6 kinase subfamily. In terms of assembly, interacts with SPHK1 and phosphatidylinositol 3-phosphate. Interacts (via PX domain) with PRDX3. Highly expressed in testis, skeletal muscle, brain, heart, placenta, kidney and liver and weakly expressed in thymus, small intestine, lung and colon.

Its subcellular location is the cytoplasm. The protein localises to the membrane. It is found in the early endosome. The catalysed reaction is L-seryl-[protein] + ATP = O-phospho-L-seryl-[protein] + ADP + H(+). It carries out the reaction L-threonyl-[protein] + ATP = O-phospho-L-threonyl-[protein] + ADP + H(+). May be involved in transmitting sphingosine-1 phosphate (SPP)-mediated signaling into the cell. Plays a role in the recruitment of PRDX3 to early endosomes. This is Ribosomal protein S6 kinase delta-1 (RPS6KC1) from Homo sapiens (Human).